Here is an 87-residue protein sequence, read N- to C-terminus: Small ribosomal subunit protein uS15 (87 aa).

The protein belongs to the universal ribosomal protein uS15 family. As to quaternary structure, part of the 30S ribosomal subunit. Forms a bridge to the 50S subunit in the 70S ribosome, contacting the 23S rRNA.

One of the primary rRNA binding proteins, it binds directly to 16S rRNA where it helps nucleate assembly of the platform of the 30S subunit by binding and bridging several RNA helices of the 16S rRNA. Its function is as follows. Forms an intersubunit bridge (bridge B4) with the 23S rRNA of the 50S subunit in the ribosome. The sequence is that of Small ribosomal subunit protein uS15 from Dehalococcoides mccartyi (strain ATCC BAA-2266 / KCTC 15142 / 195) (Dehalococcoides ethenogenes (strain 195)).